Consider the following 182-residue polypeptide: ADP-ribosylation factor 1 (182 aa).

Gly2 carries N-myristoyl glycine lipidation. GTP contacts are provided by residues 24-31 (GLDNAGKT), 67-71 (DLGGQ), and 126-129 (NKQD).

The protein belongs to the small GTPase superfamily. Arf family.

The protein localises to the golgi apparatus. The catalysed reaction is GTP + H2O = GDP + phosphate + H(+). GTP-binding protein involved in protein trafficking; may modulate vesicle budding and uncoating within the Golgi apparatus. The sequence is that of ADP-ribosylation factor 1 (ARF1) from Brassica rapa subsp. pekinensis (Chinese cabbage).